A 494-amino-acid polypeptide reads, in one-letter code: Cytochrome P450 2A5 (494 aa).

The residue at position 131 (serine 131) is a Phosphoserine. Lysine 379 carries the N6-acetyllysine modification. Residue cysteine 439 participates in heme binding.

This sequence belongs to the cytochrome P450 family. Heme is required as a cofactor. Liver, with a strong circadian rhythmicity. Circadian expression is regulated by DBP.

The protein resides in the endoplasmic reticulum membrane. Its subcellular location is the microsome membrane. It carries out the reaction an organic molecule + reduced [NADPH--hemoprotein reductase] + O2 = an alcohol + oxidized [NADPH--hemoprotein reductase] + H2O + H(+). Functionally, exhibits a high coumarin 7-hydroxylase activity. This Mus musculus (Mouse) protein is Cytochrome P450 2A5 (Cyp2a5).